A 208-amino-acid chain; its full sequence is MTKGILGKKVGMTQIFTESGEFIPVTVIEATPNVVLQVKTVETDGYEAVQVGFDDKREVLSNKPAKGHVAKANTAPKRFIREFKNIEGLEVGAELSVEQFEAGDVVDVTGISKGKGFQGVIKRHGQSRGPMAHGSRYHRRPGSMGPVAPNRVFKNKRLAGRMGGNRVTVQNLEIVQVIPEKNVILVKGNVPGAKKSLITIKSAVKAAK.

A disordered region spans residues 122–148; the sequence is KRHGQSRGPMAHGSRYHRRPGSMGPVA.

The protein belongs to the universal ribosomal protein uL3 family. Part of the 50S ribosomal subunit. Forms a cluster with proteins L14 and L19.

One of the primary rRNA binding proteins, it binds directly near the 3'-end of the 23S rRNA, where it nucleates assembly of the 50S subunit. The polypeptide is Large ribosomal subunit protein uL3 (Streptococcus pyogenes serotype M1).